We begin with the raw amino-acid sequence, 245 residues long: Chlorophyll a-b binding protein 1B-21, chloroplastic (245 aa).

Residues 1–44 (MASSSGLRSCSAVGVPSLLAPSSRSGRSGLPFCAYATTSGRVTM) constitute a chloroplast transit peptide. Position 48 (Trp-48) interacts with chlorophyll b. Residues Phe-68, Glu-87, and His-90 each contribute to the chlorophyll a site. Arg-92 serves as a coordination point for chlorophyll b. Residues 93-113 (WAMLCVPGVLVPEALGLGNWV) form a helical membrane-spanning segment. Leu-129 is a binding site for chlorophyll a. Residues 132-152 (PVPWGNLPTILAIEFLAIAFA) traverse the membrane as a helical segment. Chlorophyll b-binding residues include Val-133, Glu-153, and Arg-156. Lys-190, Glu-191, Asn-194, Arg-196, Gln-208, and His-224 together coordinate chlorophyll a.

It belongs to the light-harvesting chlorophyll a/b-binding (LHC) protein family. The LHC complex consists of chlorophyll a-b binding proteins. The cofactor is Binds at least 14 chlorophylls (8 Chl-a and 6 Chl-b) and carotenoids such as lutein and neoxanthin.. In terms of processing, photoregulated by reversible phosphorylation of its threonine residues.

The protein localises to the plastid. The protein resides in the chloroplast thylakoid membrane. The light-harvesting complex (LHC) functions as a light receptor, it captures and delivers excitation energy to photosystems with which it is closely associated. The sequence is that of Chlorophyll a-b binding protein 1B-21, chloroplastic (LHC Ib-21) from Hordeum vulgare (Barley).